The chain runs to 187 residues: Hypoxanthine/guanine phosphoribosyltransferase (187 aa).

Belongs to the purine/pyrimidine phosphoribosyltransferase family. Archaeal HPRT subfamily. As to quaternary structure, homodimer.

It is found in the cytoplasm. It catalyses the reaction IMP + diphosphate = hypoxanthine + 5-phospho-alpha-D-ribose 1-diphosphate. The catalysed reaction is GMP + diphosphate = guanine + 5-phospho-alpha-D-ribose 1-diphosphate. The protein operates within purine metabolism; IMP biosynthesis via salvage pathway; IMP from hypoxanthine: step 1/1. Functionally, catalyzes a salvage reaction resulting in the formation of IMP that is energically less costly than de novo synthesis. This Methanocorpusculum labreanum (strain ATCC 43576 / DSM 4855 / Z) protein is Hypoxanthine/guanine phosphoribosyltransferase.